Here is a 137-residue protein sequence, read N- to C-terminus: Nucleoside diphosphate kinase (137 aa).

The ATP site is built by lysine 9, phenylalanine 57, arginine 85, threonine 91, arginine 102, and asparagine 112. Histidine 115 acts as the Pros-phosphohistidine intermediate in catalysis.

The protein belongs to the NDK family. In terms of assembly, homotetramer. The cofactor is Mg(2+).

It is found in the cytoplasm. It carries out the reaction a 2'-deoxyribonucleoside 5'-diphosphate + ATP = a 2'-deoxyribonucleoside 5'-triphosphate + ADP. It catalyses the reaction a ribonucleoside 5'-diphosphate + ATP = a ribonucleoside 5'-triphosphate + ADP. In terms of biological role, major role in the synthesis of nucleoside triphosphates other than ATP. The ATP gamma phosphate is transferred to the NDP beta phosphate via a ping-pong mechanism, using a phosphorylated active-site intermediate. This is Nucleoside diphosphate kinase from Geobacter sp. (strain M21).